A 372-amino-acid polypeptide reads, in one-letter code: Protein phosphatase Mn(2+)-dependent 1K (372 aa).

The transit peptide at 1–29 (MSTAALLTLVRSGGNQVRRRVLLRARGLQ) directs the protein to the mitochondrion. Residues 46-61 (KWSRFDPDGSGRPATW) form a critical for association with the BCKDH complex region. The PPM-type phosphatase domain maps to 94 to 346 (NVGSASQIGK…DNTTAVVVPF (253 aa)). Mn(2+) is bound by residues Asp127 and Gly128. Ser248 carries the post-translational modification Phosphoserine. 2 residues coordinate Mn(2+): Asp298 and Asp337.

The protein belongs to the PP2C family. In terms of assembly, monomer. Interacts with E1 and E2 components of the branched-chain alpha-ketoacid dehydrogenase (BCKDH) complex; this interaction requires colocalization in mitochondria. Interacts with BCKDHA but not with BCKDHB of the E1 component. Interacts with the 24-meric E2 core composed of DBT monomers with a 24:1 stoichiometry; the N-terminal region (residues 49-61) of PPM1K and C-terminal linker of the lipoyl domain of DBT (residues 145-160) are critical for this interaction, whereas the lipoyl prosthetic group is dispensable. Competes with BCKDK for binding to the E2 core; this interaction is modulated by branched-chain alpha-keto acids. At steady state, BCKDH holoenzyme preferentially binds BCKDK and BCKDHA is phosphorylated. In response to high levels of branched-chain alpha-keto acids, the inhibitory BCKDK is replaced by activating PPM1K leading to BCKDHA dephosphorylation and BCAA degradation. Mn(2+) is required as a cofactor.

The protein resides in the mitochondrion matrix. The catalysed reaction is O-phospho-L-seryl-[3-methyl-2-oxobutanoate dehydrogenase] + H2O = L-seryl-[3-methyl-2-oxobutanoate dehydrogenase] + phosphate. The enzyme catalyses O-phospho-L-seryl-[protein] + H2O = L-seryl-[protein] + phosphate. Its pathway is protein modification. Its function is as follows. Serine/threonine-protein phosphatase component of macronutrients metabolism. Forms a functional kinase and phosphatase pair with BCKDK, serving as a metabolic regulatory node that coordinates branched-chain amino acids (BCAAs) with glucose and lipid metabolism via two distinct phosphoprotein targets: mitochondrial BCKDHA subunit of the branched-chain alpha-ketoacid dehydrogenase (BCKDH) complex and cytosolic ACLY, a lipogenic enzyme of Krebs cycle. At high levels of branched-chain ketoacids, dephosphorylates and activates mitochondrial BCKDH complex, a multisubunit complex consisting of three multimeric components each involved in different steps of BCAA catabolism: E1 composed of BCKDHA and BCKDHB, E2 core composed of DBT monomers, and E3 composed of DLD monomers. Tightly associates with the E2 component of BCKDH complex and dephosphorylates BCKDHA on Ser-347. Regulates the reversible phosphorylation of ACLY in response to changes in cellular carbohydrate abundance such as occurs during fasting to feeding metabolic transition. At fasting state, appears to dephosphorylate ACLY on Ser-455 and inactivate it. Refeeding stimulates MLXIPL/ChREBP transcription factor, leading to increased BCKDK to PPM1K expression ratio, phosphorylation and activation of ACLY that ultimately results in the generation of malonyl-CoA and oxaloacetate immediate substrates of de novo lipogenesis and gluconeogenesis, respectively. Recognizes phosphosites having SxS or RxxS motifs and strictly depends on Mn(2+) ions for the phosphatase activity. Regulates Ca(2+)-induced opening of mitochondrial transition pore and apoptotic cell death. The chain is Protein phosphatase Mn(2+)-dependent 1K (PPM1K) from Bos taurus (Bovine).